The sequence spans 355 residues: NADH-quinone oxidoreductase subunit H (355 aa).

8 helical membrane passes run 25-45, 91-111, 126-146, 170-190, 205-225, 252-272, 290-310, and 330-350; these read IVRI…LILW, WLYL…WAVI, LLYA…AGWA, MGFA…SEIV, FLSW…ISGI, GMAF…ISAL, FIPG…VFIW, and VFLP…MSPL.

This sequence belongs to the complex I subunit 1 family. As to quaternary structure, NDH-1 is composed of 14 different subunits. Subunits NuoA, H, J, K, L, M, N constitute the membrane sector of the complex.

The protein localises to the cell inner membrane. It carries out the reaction a quinone + NADH + 5 H(+)(in) = a quinol + NAD(+) + 4 H(+)(out). In terms of biological role, NDH-1 shuttles electrons from NADH, via FMN and iron-sulfur (Fe-S) centers, to quinones in the respiratory chain. The immediate electron acceptor for the enzyme in this species is believed to be ubiquinone. Couples the redox reaction to proton translocation (for every two electrons transferred, four hydrogen ions are translocated across the cytoplasmic membrane), and thus conserves the redox energy in a proton gradient. This subunit may bind ubiquinone. This Burkholderia lata (strain ATCC 17760 / DSM 23089 / LMG 22485 / NCIMB 9086 / R18194 / 383) protein is NADH-quinone oxidoreductase subunit H.